Consider the following 590-residue polypeptide: G protein-coupled receptor kinase 5 (590 aa).

The N-terminal stretch occupies residues Met1–Thr185. Positions Gly20–Ile39 are interaction with calmodulin. In terms of domain architecture, RGS spans Tyr53–Leu171. Ser136 carries the phosphoserine modification. The region spanning Phe186–Phe448 is the Protein kinase domain. Residues Leu192–Val200 and Lys215 contribute to the ATP site. The active-site Proton acceptor is the Asp311. The short motif at Arg388–Glu395 is the Nuclear localization signal element. The 66-residue stretch at Arg449–Glu514 folds into the AGC-kinase C-terminal domain. Position 484 is a phosphoserine; by autocatalysis (Ser484). Residue Thr485 is modified to Phosphothreonine; by autocatalysis. A sufficient for membrane localization region spans residues Pro546–Ser565. The disordered stretch occupies residues Arg557–Ser590. Residues Ser561 to Ser590 show a composition bias toward low complexity. Phosphoserine is present on Ser579.

The protein belongs to the protein kinase superfamily. AGC Ser/Thr protein kinase family. GPRK subfamily. As to quaternary structure, interacts with ST13 (via the C-terminus 303-319 AA). Interacts with TP53/p53. Interacts with HTR4 (via C-terminus 330-346 AA); this interaction is promoted by 5-HT (serotonin). Interacts with HDAC5. Interacts with GIT1. In terms of processing, autophosphorylated. Autophosphorylation may play a critical role in the regulation of GRK5 kinase activity.

It localises to the cytoplasm. Its subcellular location is the nucleus. The protein resides in the cell membrane. It catalyses the reaction [G-protein-coupled receptor] + ATP = [G-protein-coupled receptor]-phosphate + ADP + H(+). Inhibited by calmodulin with an IC(50) of 50 nM. Calmodulin inhibits GRK5 association with receptor and phospholipid. In terms of biological role, serine/threonine kinase that phosphorylates preferentially the activated forms of a variety of G-protein-coupled receptors (GPCRs). Such receptor phosphorylation initiates beta-arrestin-mediated receptor desensitization, internalization, and signaling events leading to their down-regulation. Phosphorylates a variety of GPCRs, including adrenergic receptors, muscarinic acetylcholine receptors (more specifically Gi-coupled M2/M4 subtypes), dopamine receptors and opioid receptors. In addition to GPCRs, also phosphorylates various substrates: Hsc70-interacting protein/ST13, TP53/p53, HDAC5, and arrestin-1/ARRB1. Phosphorylation of ARRB1 by GRK5 inhibits G-protein independent MAPK1/MAPK3 signaling downstream of 5HT4-receptors. Phosphorylation of HDAC5, a repressor of myocyte enhancer factor 2 (MEF2) leading to nuclear export of HDAC5 and allowing MEF2-mediated transcription. Phosphorylation of TP53/p53, a crucial tumor suppressor, inhibits TP53/p53-mediated apoptosis. Phosphorylation of ST13 regulates internalization of the chemokine receptor. Phosphorylates rhodopsin (RHO) (in vitro) and a non G-protein-coupled receptor, LRP6 during Wnt signaling (in vitro). This Mus musculus (Mouse) protein is G protein-coupled receptor kinase 5 (Grk5).